Reading from the N-terminus, the 823-residue chain is MAFSQVQCLDDNHVNWRSSESKPEFFYSEEQRLALEALVARGRDAFYEVLKRENIRDFLSELELKRILETIEVYDPGSEDPRGTGPSQGPEDNGVGDGEEASGADGVPIEAEPLPSLEYWPQKSDRSIPQLDLGWPDTIAYRGVTRASVYMQPPIDGQAHIKEVVRKMISQAQKVIAVVMDMFTDVDIFKDLLDAGFKRKVAVYIIVDESNVKYFLHMCERACMHLGHLKNLRVRSSGGTEFFTRSATKFKGALAQKFMFVDGDRAVCGSYSFTWSAARTDRNVISVLSGQVVEMFDRQFQELYLMSHSVSLKGIPMEKEPEPEPIVLPSVVPLVPAGTVAKKLVNPKYALVKAKSVDEIAKISSEKQEAKKPLGLKGPALAEHPGELPELLPPIHPGLLHLERANMFEYLPTWVEPDPEPGSDILGYINIIDPNIWNPQPSQMNRIKIRDTSQASAQHQLWKQSQDSRPRPEPCPPPEPSAPQDGVPAENGLPQGDPEPLPPVPKPRTVPVADVLARDSSDIGWVLELPKEEAPQNGTDHRLPRMAGPGHAPLQRQLSVTQDDPESLGVGLPNGLDGVEEEDDDDYVTLSDQDSHSGSSGRGPGPRRPSVASSVSEEYFEVREHSVPLRRRHSEQVANGPTPPPRRQLSAPHITRGTFVGPQGGSPWAQSRGREEADALKRMQAQRSTDKEAQGQQFHHHRVPASGTRDKDGFPGPPRYRSAADSVQSSTRNAGPAMAGPHHWQAKGGQVPRLLPDPGSPRLAQNARPMTDGRATEEHPSPFGIPYSKLSQSKHLKARTGGSQWASSDSKRRAQAPRDRKDP.

At Ala-2 the chain carries N-acetylalanine. A DUF1669 region spans residues Ala-2–Leu-312. Ser-4 carries the phosphoserine modification. The disordered stretch occupies residues Asp-75–Pro-108. Residues Ser-124, Ser-127, and Ser-356 each carry the phosphoserine modification. The tract at residues Arg-450 to Pro-823 is disordered. The segment covering Thr-452–Ser-465 has biased composition (polar residues). A compositionally biased stretch (pro residues) spans Asp-497–Arg-508. A compositionally biased stretch (basic and acidic residues) spans Leu-529 to Leu-543. Residues Gly-578 to Tyr-587 show a composition bias toward acidic residues. Ser-610, Ser-614, Ser-616, Ser-650, and Ser-666 each carry phosphoserine. Composition is skewed to basic and acidic residues over residues Arg-672–Lys-681 and Asp-809–Pro-823.

The protein belongs to the FAM83 family. Interacts with SMAD1 (via MH2 domain); in a SMAD4-independent manner. Directly interacts (via DUF1669) with casein kinase isoforms CSNK1A1 and CSNK1A1L. In terms of processing, phosphorylated in vitro by CSNK1A1. Post-translationally, BMP signaling induces the phosphorylation by BMPR1A at Ser-610, Ser-614 and Ser-616. Phosphorylation at Ser-610 is necessary for the activation of SMAD4-independent BMP target genes such as NEDD9 and ASNS.

Its subcellular location is the cytoplasm. The protein resides in the cytosol. It localises to the nucleus. In terms of biological role, substrate for type I BMP receptor kinase involved in regulation of some target genes of the BMP signaling pathway. Also regulates the expression of several non-BMP target genes, suggesting a role in other signaling pathways. This chain is Protein FAM83G (FAM83G), found in Homo sapiens (Human).